A 45-amino-acid polypeptide reads, in one-letter code: MVSSAQLDFNLQALLGQLSQDDLCKFKSLIRTVSLGNELQKIPQT.

As to expression, expressed in all tissues tested, including spleen, lymph node, thymus, tonsil, peripheral blood leukocyte, bone marrow, liver, heart, brain, placenta, lung, skeletal muscle, kidney and pancreas.

Its subcellular location is the cytoplasm. It localises to the nucleus. In terms of biological role, may function as a negative regulator of NF-kappa-B by preventing RELA/p65 phosphorylation at 'Ser-536', thereby inhibiting its transcriptional activity. Through NF-kappa-B regulation may control cytokine release upon Toll-like receptors activation and therefore play a role in modulation of innate immunity. May also play a role in cell cycle progression and apoptotic process. In Homo sapiens (Human), this protein is NLR family pyrin domain-containing protein 2B.